Here is a 193-residue protein sequence, read N- to C-terminus: Protein Syd (193 aa).

It belongs to the Syd family.

The protein resides in the cell inner membrane. Its function is as follows. Interacts with the SecY protein in vivo. May bind preferentially to an uncomplexed state of SecY, thus functioning either as a chelating agent for excess SecY in the cell or as a regulatory factor that negatively controls the translocase function. This chain is Protein Syd, found in Tolumonas auensis (strain DSM 9187 / NBRC 110442 / TA 4).